Reading from the N-terminus, the 152-residue chain is Large ribosomal subunit protein bL9 (152 aa).

The protein belongs to the bacterial ribosomal protein bL9 family.

Its function is as follows. Binds to the 23S rRNA. The chain is Large ribosomal subunit protein bL9 from Prochlorococcus marinus (strain NATL1A).